The primary structure comprises 1372 residues: Serine protease pic autotransporter (1372 aa).

The N-terminal stretch at 1–55 (MNKVYSLKYCPVTGGLIAVSELARRVIKKTCRRLTHILLAGIPAICLCYSQISQA) is a signal peptide. One can recognise a Peptidase S6 domain in the interval 56 to 301 (GIVRSDIAYQ…NVIPTDYLNQ (246 aa)). Catalysis depends on charge relay system residues histidine 127, aspartate 155, and serine 258. The Autotransporter domain occupies 1106–1372 (DTNGDAGAWA…AVNANFRYMF (267 aa)).

Cleaved to release the mature protein from the outer membrane.

It localises to the periplasm. The protein localises to the secreted. The protein resides in the cell surface. Its subcellular location is the cell outer membrane. Functionally, involved in intestinal colonization, displays in vitro mucinolytic activity, serum resistance, and hemagglutination. Important to penetrate the intestinal mucus layer. This chain is Serine protease pic autotransporter (pic), found in Shigella flexneri.